Reading from the N-terminus, the 400-residue chain is Tryptophan synthase beta chain (400 aa).

An N6-(pyridoxal phosphate)lysine modification is found at Lys92.

The protein belongs to the TrpB family. Tetramer of two alpha and two beta chains. It depends on pyridoxal 5'-phosphate as a cofactor.

The catalysed reaction is (1S,2R)-1-C-(indol-3-yl)glycerol 3-phosphate + L-serine = D-glyceraldehyde 3-phosphate + L-tryptophan + H2O. It functions in the pathway amino-acid biosynthesis; L-tryptophan biosynthesis; L-tryptophan from chorismate: step 5/5. Its function is as follows. The beta subunit is responsible for the synthesis of L-tryptophan from indole and L-serine. The sequence is that of Tryptophan synthase beta chain from Leptospira borgpetersenii serovar Hardjo-bovis (strain JB197).